Here is a 262-residue protein sequence, read N- to C-terminus: Cyclin-dependent kinase inhibitor 1 (262 aa).

The tract at residues 140–212 (SDVAEAGSEH…SAQQATRPKI (73 aa)) is disordered. Residues 160-169 (SGRDRERRET) are compositionally biased toward basic and acidic residues. Positions 198-208 (SAATASAQQAT) are enriched in low complexity.

It belongs to the CDI family. ICK/KRP subfamily.

The chain is Cyclin-dependent kinase inhibitor 1 (KRP1) from Oryza sativa subsp. indica (Rice).